The primary structure comprises 173 residues: 3-hydroxydecanoyl-[acyl-carrier-protein] dehydratase (173 aa).

Residue His-71 is part of the active site.

The protein belongs to the thioester dehydratase family. FabA subfamily. In terms of assembly, homodimer.

It is found in the cytoplasm. The catalysed reaction is a (3R)-hydroxyacyl-[ACP] = a (2E)-enoyl-[ACP] + H2O. It carries out the reaction (3R)-hydroxydecanoyl-[ACP] = (2E)-decenoyl-[ACP] + H2O. It catalyses the reaction (2E)-decenoyl-[ACP] = (3Z)-decenoyl-[ACP]. It functions in the pathway lipid metabolism; fatty acid biosynthesis. Functionally, necessary for the introduction of cis unsaturation into fatty acids. Catalyzes the dehydration of (3R)-3-hydroxydecanoyl-ACP to E-(2)-decenoyl-ACP and then its isomerization to Z-(3)-decenoyl-ACP. Can catalyze the dehydratase reaction for beta-hydroxyacyl-ACPs with saturated chain lengths up to 16:0, being most active on intermediate chain length. This Bradyrhizobium sp. (strain ORS 278) protein is 3-hydroxydecanoyl-[acyl-carrier-protein] dehydratase.